Reading from the N-terminus, the 396-residue chain is Acetate kinase (396 aa).

Mg(2+) is bound at residue N8. Residue K15 participates in ATP binding. Position 89 (R89) interacts with substrate. D146 functions as the Proton donor/acceptor in the catalytic mechanism. ATP contacts are provided by residues 206-210 (HIGNG), 283-285 (DMR), and 331-335 (GVGEN). E383 contacts Mg(2+).

Belongs to the acetokinase family. Homodimer. Mg(2+) is required as a cofactor. Requires Mn(2+) as cofactor.

It localises to the cytoplasm. The catalysed reaction is acetate + ATP = acetyl phosphate + ADP. It functions in the pathway metabolic intermediate biosynthesis; acetyl-CoA biosynthesis; acetyl-CoA from acetate: step 1/2. In terms of biological role, catalyzes the formation of acetyl phosphate from acetate and ATP. Can also catalyze the reverse reaction. This chain is Acetate kinase, found in Streptococcus pneumoniae (strain Hungary19A-6).